Here is a 456-residue protein sequence, read N- to C-terminus: Bifunctional protein GlmU (456 aa).

The interval 1–229 (MLNSAMSVVI…ISETDGVNNR (229 aa)) is pyrophosphorylase. UDP-N-acetyl-alpha-D-glucosamine contacts are provided by residues 11-14 (LAAG), Lys25, Gln76, 81-82 (GT), 103-105 (YGD), Gly140, Glu154, Asn169, and Asn227. Mg(2+) is bound at residue Asp105. Asn227 serves as a coordination point for Mg(2+). Positions 230-250 (LQLSRLERIYQAEQAEKLLLS) are linker. The tract at residues 251–456 (GVMLRDPARF…QGWQRPVKKK (206 aa)) is N-acetyltransferase. UDP-N-acetyl-alpha-D-glucosamine contacts are provided by Arg333 and Lys351. The Proton acceptor role is filled by His363. UDP-N-acetyl-alpha-D-glucosamine-binding residues include Tyr366 and Asn377. Acetyl-CoA contacts are provided by residues Ala380, 386–387 (NY), Ser405, Ala423, and Arg440.

The protein in the N-terminal section; belongs to the N-acetylglucosamine-1-phosphate uridyltransferase family. In the C-terminal section; belongs to the transferase hexapeptide repeat family. As to quaternary structure, homotrimer. It depends on Mg(2+) as a cofactor.

It localises to the cytoplasm. The enzyme catalyses alpha-D-glucosamine 1-phosphate + acetyl-CoA = N-acetyl-alpha-D-glucosamine 1-phosphate + CoA + H(+). It carries out the reaction N-acetyl-alpha-D-glucosamine 1-phosphate + UTP + H(+) = UDP-N-acetyl-alpha-D-glucosamine + diphosphate. The protein operates within nucleotide-sugar biosynthesis; UDP-N-acetyl-alpha-D-glucosamine biosynthesis; N-acetyl-alpha-D-glucosamine 1-phosphate from alpha-D-glucosamine 6-phosphate (route II): step 2/2. Its pathway is nucleotide-sugar biosynthesis; UDP-N-acetyl-alpha-D-glucosamine biosynthesis; UDP-N-acetyl-alpha-D-glucosamine from N-acetyl-alpha-D-glucosamine 1-phosphate: step 1/1. It participates in bacterial outer membrane biogenesis; LPS lipid A biosynthesis. Functionally, catalyzes the last two sequential reactions in the de novo biosynthetic pathway for UDP-N-acetylglucosamine (UDP-GlcNAc). The C-terminal domain catalyzes the transfer of acetyl group from acetyl coenzyme A to glucosamine-1-phosphate (GlcN-1-P) to produce N-acetylglucosamine-1-phosphate (GlcNAc-1-P), which is converted into UDP-GlcNAc by the transfer of uridine 5-monophosphate (from uridine 5-triphosphate), a reaction catalyzed by the N-terminal domain. In Salmonella heidelberg (strain SL476), this protein is Bifunctional protein GlmU.